The chain runs to 130 residues: Small ribosomal subunit protein uS11 (130 aa).

This sequence belongs to the universal ribosomal protein uS11 family. Part of the 30S ribosomal subunit. Interacts with proteins S7 and S18. Binds to IF-3.

Located on the platform of the 30S subunit, it bridges several disparate RNA helices of the 16S rRNA. Forms part of the Shine-Dalgarno cleft in the 70S ribosome. The sequence is that of Small ribosomal subunit protein uS11 from Syntrophus aciditrophicus (strain SB).